Consider the following 193-residue polypeptide: Recombination protein RecR (193 aa).

The C4-type zinc finger occupies 61–76 (CASCNALSESEICEIC). One can recognise a Toprim domain in the interval 84–170 (SQLCMVLHPR…TFTKIAQGVP (87 aa)).

It belongs to the RecR family.

May play a role in DNA repair. It seems to be involved in an RecBC-independent recombinational process of DNA repair. It may act with RecF and RecO. In Helicobacter pylori (strain Shi470), this protein is Recombination protein RecR.